A 236-amino-acid polypeptide reads, in one-letter code: Calcium-binding lectin RapA2 (236 aa).

It localises to the secreted. Interacts specifically in a calcium-dependent manner with the acidic exopolysaccharide (EPS) and capsular polysaccharide produced by R.leguminosarum. Could be involved in the development of the biofilm matrix made of EPS. In Rhizobium johnstonii (strain DSM 114642 / LMG 32736 / 3841) (Rhizobium leguminosarum bv. viciae), this protein is Calcium-binding lectin RapA2.